We begin with the raw amino-acid sequence, 383 residues long: N-acetyldiaminopimelate deacetylase (383 aa).

Aspartate 75 is an active-site residue. The active-site Proton acceptor is the glutamate 134.

The protein belongs to the peptidase M20A family. N-acetyldiaminopimelate deacetylase subfamily.

It carries out the reaction N-acetyl-(2S,6S)-2,6-diaminopimelate + H2O = (2S,6S)-2,6-diaminopimelate + acetate. The protein operates within amino-acid biosynthesis; L-lysine biosynthesis via DAP pathway; LL-2,6-diaminopimelate from (S)-tetrahydrodipicolinate (acetylase route): step 3/3. Catalyzes the conversion of N-acetyl-diaminopimelate to diaminopimelate and acetate. This Lactobacillus acidophilus (strain ATCC 700396 / NCK56 / N2 / NCFM) protein is N-acetyldiaminopimelate deacetylase.